Consider the following 926-residue polypeptide: Alpha-aminoadipic semialdehyde synthase, mitochondrial (926 aa).

Residues 1–27 (MLRAQRLRLARLRACVSRGLHHKPVMA) constitute a mitochondrion transit peptide. Residues 28–455 (LRREDVNAWE…DAVITSNGLL (428 aa)) are lysine-ketoglutarate reductase. Lysine 48, lysine 52, and lysine 56 each carry N6-acetyllysine. Lysine 93 carries the post-translational modification N6-acetyllysine; alternate. Lysine 93 is subject to N6-succinyllysine; alternate. Lysine 128 carries the post-translational modification N6-acetyllysine. At lysine 138 the chain carries N6-acetyllysine; alternate. Residue lysine 138 is modified to N6-succinyllysine; alternate. At lysine 274 the chain carries N6-succinyllysine. Lysine 286 bears the N6-acetyllysine; alternate mark. N6-succinyllysine; alternate is present on lysine 286. Lysine 333 carries the post-translational modification N6-succinyllysine. Lysine 458 is modified (N6-acetyllysine; alternate). Lysine 458 carries the post-translational modification N6-succinyllysine; alternate. A saccharopine dehydrogenase region spans residues 477–926 (MSTKKKVLVL…VFNTQSTIKL (450 aa)). NAD(+) is bound by residues serine 488, aspartate 512, and glutamine 516. An N6-acetyllysine; alternate mark is found at lysine 523 and lysine 535. N6-succinyllysine; alternate occurs at positions 523 and 535. Residues leucine 554, alanine 576, and serine 577 each contribute to the NAD(+) site. L-saccharopine is bound at residue 577–578 (SY). Position 584 is an N6-acetyllysine; alternate (lysine 584). Lysine 584 is modified (N6-succinyllysine; alternate). Leucine 603, aspartate 604, and proline 605 together coordinate NAD(+). Aspartate 604 contributes to the L-saccharopine binding site. Arginine 703 provides a ligand contact to L-saccharopine. Lysine 707 bears the N6-acetyllysine mark. 724-726 (TLR) is a binding site for L-saccharopine. Lysine 732 is modified (N6-succinyllysine). Lysine 739 is modified (N6-acetyllysine). At lysine 761 the chain carries N6-acetyllysine; alternate. Position 761 is an N6-succinyllysine; alternate (lysine 761). Lysine 778 and lysine 780 each carry N6-acetyllysine.

This sequence in the N-terminal section; belongs to the AlaDH/PNT family. In the C-terminal section; belongs to the saccharopine dehydrogenase family. In terms of assembly, homotetramer.

It localises to the mitochondrion. It catalyses the reaction L-saccharopine + NADP(+) + H2O = L-lysine + 2-oxoglutarate + NADPH + H(+). It carries out the reaction L-saccharopine + NAD(+) + H2O = (S)-2-amino-6-oxohexanoate + L-glutamate + NADH + H(+). It functions in the pathway amino-acid degradation; L-lysine degradation via saccharopine pathway; glutaryl-CoA from L-lysine: step 1/6. It participates in amino-acid degradation; L-lysine degradation via saccharopine pathway; glutaryl-CoA from L-lysine: step 2/6. In terms of biological role, bifunctional enzyme that catalyzes the first two steps in lysine degradation. This chain is Alpha-aminoadipic semialdehyde synthase, mitochondrial, found in Rattus norvegicus (Rat).